Here is a 331-residue protein sequence, read N- to C-terminus: Probable staphylococcal-like nuclease CAN1 (331 aa).

G2 is lipidated: N-myristoyl glycine. C10 is lipidated: S-palmitoyl cysteine. The 178-residue stretch at H136–A313 folds into the TNase-like domain. D149 contacts Ca(2+). Residue R220 is part of the active site. D225 contacts Ca(2+). Active-site residues include E228 and R262. The segment at G306 to A331 is disordered. The span at K318 to A331 shows a compositional bias: basic and acidic residues.

The protein belongs to the thermonuclease family. Ca(2+) is required as a cofactor.

The protein localises to the cell membrane. Functionally, enzyme that catalyzes the hydrolysis of both DNA and RNA at the 5' position of the phosphodiester bond. This is Probable staphylococcal-like nuclease CAN1 from Oryza sativa subsp. japonica (Rice).